Consider the following 908-residue polypeptide: UPF0182 protein Csac_0864 (908 aa).

7 helical membrane passes run 22–42 (FVIS…DLFL), 62–82 (FYVK…VFFV), 98–118 (ISLL…ALIA), 166–186 (FLFY…IVLY), 208–228 (HIFF…KYEM), 253–273 (YFRL…YFFI), and 286–306 (SYIG…YFVV).

Belongs to the UPF0182 family.

The protein resides in the cell membrane. The protein is UPF0182 protein Csac_0864 of Caldicellulosiruptor saccharolyticus (strain ATCC 43494 / DSM 8903 / Tp8T 6331).